The chain runs to 77 residues: Probable Fe(2+)-trafficking protein (77 aa).

Belongs to the Fe(2+)-trafficking protein family. In terms of assembly, monomer.

In terms of biological role, could be a mediator in iron transactions between iron acquisition and iron-requiring processes, such as synthesis and/or repair of Fe-S clusters in biosynthetic enzymes. This chain is Probable Fe(2+)-trafficking protein, found in Buchnera aphidicola subsp. Acyrthosiphon pisum (strain APS) (Acyrthosiphon pisum symbiotic bacterium).